We begin with the raw amino-acid sequence, 168 residues long: ATP synthase F(1) complex subunit delta, mitochondrial (168 aa).

The transit peptide at 1–22 (MLPAALLRHPGLRRLVLQARTY) directs the protein to the mitochondrion. N6-acetyllysine; alternate is present on residues Lys136 and Lys165. An N6-succinyllysine; alternate mark is found at Lys136 and Lys165.

It belongs to the ATPase epsilon chain family. Component of the ATP synthase complex composed at least of ATP5F1A/subunit alpha, ATP5F1B/subunit beta, ATP5MC1/subunit c (homooctomer), MT-ATP6/subunit a, MT-ATP8/subunit 8, ATP5ME/subunit e, ATP5MF/subunit f, ATP5MG/subunit g, ATP5MK/subunit k, ATP5MJ/subunit j, ATP5F1C/subunit gamma, ATP5F1D/subunit delta, ATP5F1E/subunit epsilon, ATP5PF/subunit F6, ATP5PB/subunit b, ATP5PD/subunit d, ATP5PO/subunit OSCP. ATP synthase complex consists of a soluble F(1) head domain (subunits alpha(3) and beta(3)) - the catalytic core - and a membrane F(0) domain - the membrane proton channel (subunits c, a, 8, e, f, g, k and j). These two domains are linked by a central stalk (subunits gamma, delta, and epsilon) rotating inside the F1 region and a stationary peripheral stalk (subunits F6, b, d, and OSCP). Component of a complex composed at least by ATPIF1, ATP5F1A, ATP5F1B, ATP5F1C AND ATP5F1E.

The protein localises to the mitochondrion. It is found in the mitochondrion inner membrane. In terms of biological role, subunit delta, of the mitochondrial membrane ATP synthase complex (F(1)F(0) ATP synthase or Complex V) that produces ATP from ADP in the presence of a proton gradient across the membrane which is generated by electron transport complexes of the respiratory chain. ATP synthase complex consist of a soluble F(1) head domain - the catalytic core - and a membrane F(1) domain - the membrane proton channel. These two domains are linked by a central stalk rotating inside the F(1) region and a stationary peripheral stalk. During catalysis, ATP synthesis in the catalytic domain of F(1) is coupled via a rotary mechanism of the central stalk subunits to proton translocation. In vivo, can only synthesize ATP although its ATP hydrolase activity can be activated artificially in vitro. With the central stalk subunit gamma, is essential for the biogenesis of F(1) catalytic part of the ATP synthase complex namely in the formation of F1 assembly intermediate. The chain is ATP synthase F(1) complex subunit delta, mitochondrial from Rattus norvegicus (Rat).